The sequence spans 545 residues: Germacrene D synthase 1 (545 aa).

Residues D298, D302, N443, and E451 each contribute to the Mg(2+) site. The DDXXD motif motif lies at 298 to 302 (DDTFD).

Belongs to the terpene synthase family. Mg(2+) is required as a cofactor.

The protein localises to the cytoplasm. It localises to the cytosol. It carries out the reaction (2E,6E)-farnesyl diphosphate = (-)-germacrene D + diphosphate. The protein operates within secondary metabolite biosynthesis; terpenoid biosynthesis. Its function is as follows. Sesquiterpene synthase involved in germacrene D biosynthesis. Also produces at least 13 additional sesquiterpene products, including germacrene C and (+)-germacrene A, beta-ylangene, (E)-beta-farnesene and (E,E)-alpha-farnesene. This Pogostemon cablin (Patchouli) protein is Germacrene D synthase 1.